We begin with the raw amino-acid sequence, 319 residues long: Large ribosomal subunit protein uL29m (319 aa).

Positions 1–55 (MWKRSFHSQGGPLRARTKFTKPKPKQPVLPKDKIRPPTQLTHHSNNLRITEPIPP) are disordered. Over residues 15–24 (ARTKFTKPKP) the composition is skewed to basic residues. A compositionally biased stretch (polar residues) spans 38–48 (TQLTHHSNNLR).

The protein belongs to the universal ribosomal protein uL29 family. In terms of assembly, component of the mitochondrial large ribosomal subunit. Mature mitochondrial ribosomes consist of a small (37S) and a large (54S) subunit. The 37S subunit contains at least 33 different proteins and 1 molecule of RNA (15S). The 54S subunit contains at least 45 different proteins and 1 molecule of RNA (21S).

The protein resides in the mitochondrion. This is Large ribosomal subunit protein uL29m (MRPL4) from Saccharomyces cerevisiae (strain YJM789) (Baker's yeast).